The primary structure comprises 132 residues: Protein NrdI (132 aa).

It belongs to the NrdI family.

Functionally, probably involved in ribonucleotide reductase function. In Bartonella tribocorum (strain CIP 105476 / IBS 506), this protein is Protein NrdI.